A 793-amino-acid chain; its full sequence is Ferredoxin/F(420)H(2)-dependent CoB-CoM heterodisulfide reductase subunit A (793 aa).

Position 147-170 (147-170 (GGGVAGIEAALNLAEAGFPVTMVE)) interacts with FAD. 4 consecutive 4Fe-4S ferredoxin-type domains span residues 233 to 264 (RKPR…PMNY), 282 to 311 (QVVL…YEQK), 571 to 600 (MGAH…IENK), and 601 to 629 (KAVV…MRNF). [4Fe-4S] cluster is bound by residues Cys243, Cys246, Cys250, Cys254, Cys291, Cys294, Cys297, Cys301, Cys580, Cys583, Cys586, Cys590, Cys609, Cys612, Cys615, and Cys619.

It belongs to the HdrA family. The ferredoxin/F(420)H(2)-dependent CoB-CoM heterodisulfide reductase is composed of three subunits; HdrA2, HdrB2 and HdrC2. It depends on [4Fe-4S] cluster as a cofactor. The cofactor is [2Fe-2S] cluster. FAD serves as cofactor.

It localises to the cytoplasm. The enzyme catalyses coenzyme B + coenzyme M + 2 oxidized [2Fe-2S]-[ferredoxin] = coenzyme M-coenzyme B heterodisulfide + 2 reduced [2Fe-2S]-[ferredoxin] + 2 H(+). The catalysed reaction is coenzyme B + 2 oxidized coenzyme F420-(gamma-L-Glu)(n) + coenzyme M + 2 reduced [2Fe-2S]-[ferredoxin] + 4 H(+) = coenzyme M-coenzyme B heterodisulfide + 2 reduced coenzyme F420-(gamma-L-Glu)(n) + 2 oxidized [2Fe-2S]-[ferredoxin]. Its pathway is cofactor metabolism; coenzyme M-coenzyme B heterodisulfide reduction; coenzyme B and coenzyme M from coenzyme M-coenzyme B heterodisulfide: step 1/1. Functionally, part of a complex that catalyzes the reversible reduction of CoM-S-S-CoB to the thiol-coenzymes H-S-CoM (coenzyme M) and H-S-CoB (coenzyme B). Catalyzes the transfer of electrons from ferredoxin to CoM-S-S-CoB during methanogenesis from acetate. Electrons transfer from ferredoxin to CoM-S-S-CoB via HdrA2, HdrC2 and HdrB2. In addition, the complex can use electron bifurcation to direct electron pairs from reduced coenzyme F420 towards the reduction of both ferredoxin and CoB-CoM heterodisulfide. This activity may take place during Fe(III)-dependent anaerobic methane oxidation. The protein is Ferredoxin/F(420)H(2)-dependent CoB-CoM heterodisulfide reductase subunit A of Methanosarcina acetivorans (strain ATCC 35395 / DSM 2834 / JCM 12185 / C2A).